A 287-amino-acid polypeptide reads, in one-letter code: AA9 family lytic polysaccharide monooxygenase C (287 aa).

A signal peptide spans 1-16 (MKSVLVALATATAVSA). His-17 contacts Cu(2+). Asn-22 is a glycosylation site (N-linked (GlcNAc...) asparagine). 2 disulfides stabilise this stretch: Cys-77–Cys-230 and Cys-200–Cys-284. His-114 provides a ligand contact to Cu(2+). O2 contacts are provided by His-216 and Gln-225. Tyr-227 contacts Cu(2+).

Belongs to the polysaccharide monooxygenase AA9 family. It depends on Cu(2+) as a cofactor.

It localises to the secreted. The enzyme catalyses [(1-&gt;4)-beta-D-glucosyl]n+m + reduced acceptor + O2 = 4-dehydro-beta-D-glucosyl-[(1-&gt;4)-beta-D-glucosyl]n-1 + [(1-&gt;4)-beta-D-glucosyl]m + acceptor + H2O.. In terms of biological role, lytic polysaccharide monooxygenase (LPMO) that depolymerizes crystalline and amorphous polysaccharides via the oxidation of scissile alpha- or beta-(1-4)-glycosidic bonds, yielding C1 or C4 oxidation products. Catalysis by LPMOs requires the reduction of the active-site copper from Cu(II) to Cu(I) by a reducing agent and H(2)O(2) or O(2) as a cosubstrate. The polypeptide is AA9 family lytic polysaccharide monooxygenase C (Podospora anserina (strain S / ATCC MYA-4624 / DSM 980 / FGSC 10383) (Pleurage anserina)).